We begin with the raw amino-acid sequence, 596 residues long: Phosphoenolpyruvate carboxykinase [GTP] (596 aa).

Residues Arg-77 and 205-207 each bind substrate; that span reads YGG. Mn(2+)-binding residues include Lys-214 and His-234. Substrate is bound at residue Ser-256. Position 257–262 (257–262) interacts with GTP; sequence ACGKTN. Residue Cys-258 is part of the active site. Asp-283 serves as a coordination point for Mn(2+). Residues 362-388 form a disordered region; it reads KKGSTEKAAHPNSRFTAPAKNNPAISP. 373-375 is a substrate binding site; the sequence is NSR. GTP contacts are provided by residues Arg-375, Arg-406, and 499–502; that span reads YGDN.

This sequence belongs to the phosphoenolpyruvate carboxykinase [GTP] family. As to quaternary structure, monomer. Mn(2+) serves as cofactor.

The protein localises to the cytoplasm. It catalyses the reaction oxaloacetate + GTP = phosphoenolpyruvate + GDP + CO2. Its pathway is carbohydrate biosynthesis; gluconeogenesis. In terms of biological role, catalyzes the conversion of oxaloacetate (OAA) to phosphoenolpyruvate (PEP), the rate-limiting step in the metabolic pathway that produces glucose from lactate and other precursors derived from the citric acid cycle. This chain is Phosphoenolpyruvate carboxykinase [GTP], found in Anaeromyxobacter dehalogenans (strain 2CP-1 / ATCC BAA-258).